A 315-amino-acid polypeptide reads, in one-letter code: Homoserine kinase (315 aa).

97–107 (PPARGLGSSAT) is an ATP binding site.

The protein belongs to the GHMP kinase family. Homoserine kinase subfamily.

The protein resides in the cytoplasm. It catalyses the reaction L-homoserine + ATP = O-phospho-L-homoserine + ADP + H(+). It functions in the pathway amino-acid biosynthesis; L-threonine biosynthesis; L-threonine from L-aspartate: step 4/5. Functionally, catalyzes the ATP-dependent phosphorylation of L-homoserine to L-homoserine phosphate. In Parasynechococcus marenigrum (strain WH8102), this protein is Homoserine kinase.